Reading from the N-terminus, the 279-residue chain is Dehydrogenase/reductase SDR family member 4 (279 aa).

Residue 37 to 61 (LVTASTDGIGFAIARRLAEDGAHVV) participates in NADP(+) binding. K93 carries the N6-acetyllysine; alternate modification. K93 carries the N6-succinyllysine; alternate modification. At K106 the chain carries N6-acetyllysine. Substrate is bound at residue S170. Y183 serves as the catalytic Proton acceptor. NADP(+) is bound at residue K187. An N6-acetyllysine; alternate modification is found at K217. The residue at position 217 (K217) is an N6-succinyllysine; alternate. S221 bears the Phosphoserine mark. Residues K228 and K235 each carry the N6-succinyllysine modification. The short motif at 277–279 (SRL) is the Peroxisomal targeting signal element.

Belongs to the short-chain dehydrogenases/reductases (SDR) family. Homotetramer.

It is found in the peroxisome. The catalysed reaction is a secondary alcohol + NADP(+) = a ketone + NADPH + H(+). It carries out the reaction 3alpha-hydroxy-5beta-pregnan-20-one + NADP(+) = 5beta-pregnan-3,20-dione + NADPH + H(+). It catalyses the reaction 5beta-dihydrotestosterone + NADPH + H(+) = 5beta-androstane-3alpha,17beta-diol + NADP(+). The enzyme catalyses all-trans-retinol + NADP(+) = all-trans-retinal + NADPH + H(+). The catalysed reaction is isatin + NADPH + H(+) = 3-hydroxyindolin-2-one + NADP(+). In terms of biological role, NADPH-dependent oxidoreductase which catalyzes the reduction of a variety of compounds bearing carbonyl groups including ketosteroids, alpha-dicarbonyl compounds, aldehydes, aromatic ketones and quinones. Reduces all-trans-retinal and 9-cis retinal. Reduces 3-ketosteroids and benzil into 3alpha-hydroxysteroids and S-benzoin, respectively, in contrast to the stereoselectivity of primates DHRS4s which produce 3beta-hydroxysteroids and R-benzoin. In the reverse reaction, catalyzes the NADP-dependent oxidation of 3alpha-hydroxysteroids and alcohol, but with much lower efficiency. Involved in the metabolism of 3alpha-hydroxysteroids, retinoid, isatin and xenobiotic carbonyl compounds. This chain is Dehydrogenase/reductase SDR family member 4, found in Mus musculus (Mouse).